We begin with the raw amino-acid sequence, 446 residues long: SPARC-related modular calcium-binding protein 2 (446 aa).

An N-terminal signal peptide occupies residues M1–A21. Positions Q34–D86 constitute a Kazal-like domain. 6 disulfide bridges follow: C40–C71, C44–C64, C53–C84, C90–C113, C124–C131, and C133–C153. The Thyroglobulin type-1 1 domain occupies V87–C153. The tract at residues A147–K228 is disordered. Residues L161–D172 show a composition bias toward basic and acidic residues. N-linked (GlcNAc...) asparagine glycosylation occurs at N206. Polar residues predominate over residues N206 to C216. A Thyroglobulin type-1 2 domain is found at V213–C281. 3 disulfide bridges follow: C216–C240, C251–C258, and C260–C281. Residues D217–K228 are compositionally biased toward basic and acidic residues. 2 EF-hand domains span residues L347–K382 and K384–D419. Residues D360, N362, S364, D366, E371, D397, N399, D401, S403, and E408 each contribute to the Ca(2+) site. N-linked (GlcNAc...) asparagine glycosylation occurs at N362. The tract at residues A416–G446 is disordered.

As to quaternary structure, binds various proteins from the extracellular matrix.

Its subcellular location is the secreted. The protein localises to the extracellular space. It is found in the extracellular matrix. It localises to the basement membrane. In terms of biological role, promotes matrix assembly and cell adhesiveness. Can stimulate endothelial cell proliferation, migration, as well as angiogenesis. This chain is SPARC-related modular calcium-binding protein 2 (SMOC2), found in Homo sapiens (Human).